A 186-amino-acid chain; its full sequence is Cell wall protein phiA (186 aa).

A signal peptide spans 1–19 (MKLLAIISASLALAGFTTA).

This sequence belongs to the phiA family.

Its subcellular location is the secreted. It is found in the cell wall. Functionally, cell wall protein involved in development of asexual structures such as phialide and conidium development, and thus required for spore formation. Plays a role as a general stress protectant produced by the fungus in competition with antagonistic bacteria. The polypeptide is Cell wall protein phiA (Arthroderma benhamiae (strain ATCC MYA-4681 / CBS 112371) (Trichophyton mentagrophytes)).